Reading from the N-terminus, the 265-residue chain is Small ribosomal subunit protein uS5 (265 aa).

Positions 1–25 (MADTTTAAQADQKPTRAFGAGRPQR) are enriched in low complexity. Positions 1-49 (MADTTTAAQADQKPTRAFGAGRPQRGAGGAPQRGGPRPQRGGQGETKSW) are disordered. Position 2 is an N-acetylalanine (alanine 2). The S5 DRBM domain maps to 89–152 (LKDEVMKIVP…VAAKLSVIPV (64 aa)).

Belongs to the universal ribosomal protein uS5 family.

Functionally, component of the ribosome, a large ribonucleoprotein complex responsible for the synthesis of proteins in the cell. The small ribosomal subunit (SSU) binds messenger RNAs (mRNAs) and translates the encoded message by selecting cognate aminoacyl-transfer RNA (tRNA) molecules. The large subunit (LSU) contains the ribosomal catalytic site termed the peptidyl transferase center (PTC), which catalyzes the formation of peptide bonds, thereby polymerizing the amino acids delivered by tRNAs into a polypeptide chain. The nascent polypeptides leave the ribosome through a tunnel in the LSU and interact with protein factors that function in enzymatic processing, targeting, and the membrane insertion of nascent chains at the exit of the ribosomal tunnel. Plays a role in the assembly and function of the 40S ribosomal subunit. Mutations in this protein affects the control of translational fidelity. Involved in nucleolar processing of pre-18S ribosomal RNA and ribosome assembly. The sequence is that of Small ribosomal subunit protein uS5 (rps2) from Dictyostelium discoideum (Social amoeba).